The sequence spans 159 residues: MRLEELKRLQNPLEQVNDGKYSFENHQLAMDAENNIEKYPLNLQPLESKVKIIQRAWREYLQRQEPLGKRSPSPPSVSSEKLSSSVSMNTFSDSSTPFARAPVGKIHPYISWRLQSPGDKLPGGRKVILLYLDQLARPTGFIHTLKEPQIERLGFLTLQ.

The IQ domain maps to 47–67 (ESKVKIIQRAWREYLQRQEPL). Residues 63–88 (RQEPLGKRSPSPPSVSSEKLSSSVSM) are disordered. A compositionally biased stretch (low complexity) spans 76-87 (SVSSEKLSSSVS).

In Homo sapiens (Human), this protein is IQ domain-containing protein J.